The chain runs to 378 residues: 4-hydroxy-3-methylbut-2-en-1-yl diphosphate synthase (flavodoxin) (378 aa).

The [4Fe-4S] cluster site is built by Cys-268, Cys-271, Cys-303, and Glu-310. The segment at 359–378 (AEREKEKEKEKEKEKETQEQ) is disordered.

It belongs to the IspG family. Requires [4Fe-4S] cluster as cofactor.

It carries out the reaction (2E)-4-hydroxy-3-methylbut-2-enyl diphosphate + oxidized [flavodoxin] + H2O + 2 H(+) = 2-C-methyl-D-erythritol 2,4-cyclic diphosphate + reduced [flavodoxin]. The protein operates within isoprenoid biosynthesis; isopentenyl diphosphate biosynthesis via DXP pathway; isopentenyl diphosphate from 1-deoxy-D-xylulose 5-phosphate: step 5/6. Its function is as follows. Converts 2C-methyl-D-erythritol 2,4-cyclodiphosphate (ME-2,4cPP) into 1-hydroxy-2-methyl-2-(E)-butenyl 4-diphosphate. The polypeptide is 4-hydroxy-3-methylbut-2-en-1-yl diphosphate synthase (flavodoxin) (Bacillus cereus (strain ZK / E33L)).